A 208-amino-acid polypeptide reads, in one-letter code: MTHFDTIQKGAQQMGAALSDETIQTLVKYLAMLEKWNKAYNLTAIRDVEQMISLHLLDSLATLPYITGDNIIDVGTGPGLPGMVLAICYPEKRFTLLDSNGKKTRFLTQVKMELGIHNATVANERVEKHSHQGEYDHVISRAFASLQDMINWTLPLPKETGNFLAMKGVYPSEEIAALPKEVGLVSVEPLNVPNVQAERHMVVMTRKG.

S-adenosyl-L-methionine-binding positions include Gly-75, Leu-80, 126–127 (VE), and Arg-141.

It belongs to the methyltransferase superfamily. RNA methyltransferase RsmG family.

It localises to the cytoplasm. The enzyme catalyses guanosine(527) in 16S rRNA + S-adenosyl-L-methionine = N(7)-methylguanosine(527) in 16S rRNA + S-adenosyl-L-homocysteine. In terms of biological role, specifically methylates the N7 position of guanine in position 527 of 16S rRNA. This Marinomonas sp. (strain MWYL1) protein is Ribosomal RNA small subunit methyltransferase G.